The sequence spans 731 residues: 1,4-alpha-glucan branching enzyme GlgB (731 aa).

Aspartate 411 (nucleophile) is an active-site residue. Residue glutamate 464 is the Proton donor of the active site.

The protein belongs to the glycosyl hydrolase 13 family. GlgB subfamily. Monomer.

It catalyses the reaction Transfers a segment of a (1-&gt;4)-alpha-D-glucan chain to a primary hydroxy group in a similar glucan chain.. The protein operates within glycan biosynthesis; glycogen biosynthesis. Its function is as follows. Catalyzes the formation of the alpha-1,6-glucosidic linkages in glycogen by scission of a 1,4-alpha-linked oligosaccharide from growing alpha-1,4-glucan chains and the subsequent attachment of the oligosaccharide to the alpha-1,6 position. The chain is 1,4-alpha-glucan branching enzyme GlgB from Mycobacterium tuberculosis (strain ATCC 25177 / H37Ra).